The sequence spans 197 residues: Putative peptidyl-prolyl cis-trans isomerase (197 aa).

Residues 14–195 (NEIKVVMHTN…YDVVIESIDV (182 aa)) form the PPIase cyclophilin-type domain.

It belongs to the cyclophilin-type PPIase family.

The enzyme catalyses [protein]-peptidylproline (omega=180) = [protein]-peptidylproline (omega=0). PPIases accelerate the folding of proteins. It catalyzes the cis-trans isomerization of proline imidic peptide bonds in oligopeptides. The chain is Putative peptidyl-prolyl cis-trans isomerase from Staphylococcus epidermidis (strain ATCC 35984 / DSM 28319 / BCRC 17069 / CCUG 31568 / BM 3577 / RP62A).